Consider the following 85-residue polypeptide: Putative membrane protein insertion efficiency factor (85 aa).

The protein belongs to the UPF0161 family.

It is found in the cell membrane. Functionally, could be involved in insertion of integral membrane proteins into the membrane. Its function is as follows. Lyses fish blood cells. The sequence is that of Putative membrane protein insertion efficiency factor (hlyA) from Aeromonas hydrophila.